The sequence spans 206 residues: GDT1-like protein sll0615 (206 aa).

5 helical membrane-spanning segments follow: residues 36–56, 58–78, 114–134, 151–171, and 185–205; these read WVLVGVVGGLAAMTILSVLMG, IFTFLPTRYINYAEVALFLIF, IVPRGWGIVVESFALTFVAEW, AWGVSAGAILGHTICAVIAVM, and VTLIGGLLFYLFAVVSWWTKI.

Belongs to the GDT1 family.

The protein localises to the cell membrane. The polypeptide is GDT1-like protein sll0615 (Synechocystis sp. (strain ATCC 27184 / PCC 6803 / Kazusa)).